A 348-amino-acid polypeptide reads, in one-letter code: VIP36-like protein (348 aa).

Residues 1-44 form the signal peptide; the sequence is MAATLGPLGSWQQWRRCLSARDGSRMLLLLLLLGSGQGPQQVGA. Topologically, residues 45–313 are lumenal; sequence GQTFEYLKRE…APLPPLSGLA (269 aa). The region spanning 49–274 is the L-type lectin-like domain; the sequence is EYLKREHSLS…DVISLKLFEL (226 aa). Serine 93 and aspartate 128 together coordinate a carbohydrate. The Ca(2+) site is built by aspartate 159, tyrosine 161, and asparagine 163. Residue 161-163 participates in a carbohydrate binding; it reads YPN. N-linked (GlcNAc...) (high mannose) asparagine glycosylation occurs at asparagine 181. Residue histidine 188 coordinates a carbohydrate. Aspartate 191 lines the Ca(2+) pocket. A disulfide bond links cysteine 200 and cysteine 237. 258–260 is a binding site for a carbohydrate; the sequence is GDL. A helical transmembrane segment spans residues 314 to 336; that stretch reads LFLIVFFSLVFSVFAIVIGIILY. The Cytoplasmic segment spans residues 337-348; it reads NKWQEQSRKRFY. Residues 344–346 carry the Endoplasmic reticulum retention signal motif; it reads RKR.

In terms of tissue distribution, expressed in numerous tissues. Highest expression in skeletal muscle and kidney, intermediate levels in heart, liver and placenta, low levels in brain, thymus, spleen, small intestine and lung.

The protein localises to the endoplasmic reticulum membrane. The protein resides in the golgi apparatus membrane. Functionally, may be involved in the regulation of export from the endoplasmic reticulum of a subset of glycoproteins. May function as a regulator of ERGIC-53. This chain is VIP36-like protein (LMAN2L), found in Homo sapiens (Human).